The following is a 473-amino-acid chain: 3-isopropylmalate dehydratase large subunit (473 aa).

[4Fe-4S] cluster is bound by residues Cys-349, Cys-409, and Cys-412.

Belongs to the aconitase/IPM isomerase family. LeuC type 1 subfamily. In terms of assembly, heterodimer of LeuC and LeuD. [4Fe-4S] cluster is required as a cofactor.

It carries out the reaction (2R,3S)-3-isopropylmalate = (2S)-2-isopropylmalate. The protein operates within amino-acid biosynthesis; L-leucine biosynthesis; L-leucine from 3-methyl-2-oxobutanoate: step 2/4. Catalyzes the isomerization between 2-isopropylmalate and 3-isopropylmalate, via the formation of 2-isopropylmaleate. The polypeptide is 3-isopropylmalate dehydratase large subunit (Gloeobacter violaceus (strain ATCC 29082 / PCC 7421)).